The primary structure comprises 206 residues: Small ribosomal subunit protein uS4 (206 aa).

Positions 96–156 (GRLDNVVYRM…EKSKKQARIK (61 aa)) constitute an S4 RNA-binding domain.

This sequence belongs to the universal ribosomal protein uS4 family. As to quaternary structure, part of the 30S ribosomal subunit. Contacts protein S5. The interaction surface between S4 and S5 is involved in control of translational fidelity.

One of the primary rRNA binding proteins, it binds directly to 16S rRNA where it nucleates assembly of the body of the 30S subunit. In terms of biological role, with S5 and S12 plays an important role in translational accuracy. This is Small ribosomal subunit protein uS4 from Mannheimia succiniciproducens (strain KCTC 0769BP / MBEL55E).